A 705-amino-acid chain; its full sequence is Zinc finger protein 770 (705 aa).

Residue lysine 16 forms a Glycyl lysine isopeptide (Lys-Gly) (interchain with G-Cter in SUMO2) linkage. C2H2-type zinc fingers lie at residues 31-53 (YICNICFKHFETPSKLARHYLIH), 59-81 (FECDVCHKNFRQLVHLERHQLTH), and 85-107 (FSCNICQRHFKNLKTFVKHQQLH). Residues lysine 116, lysine 124, and lysine 149 each participate in a glycyl lysine isopeptide (Lys-Gly) (interchain with G-Cter in SUMO2) cross-link. C2H2-type zinc fingers lie at residues 164–186 (HACTICGKMFPSQSKLDRHSLIH), 192–214 (FKCVLCSKSFRQSTHLKIHQLTH), and 220–242 (FQCCFCQKGFKIQSKLLKHKQIH). Residue lysine 266 forms a Glycyl lysine isopeptide (Lys-Gly) (interchain with G-Cter in SUMO2) linkage. The segment at 298 to 322 (FQCSECEECFESEQILNGHKCLPAR) adopts a C2H2-type 7; degenerate zinc-finger fold. 4 C2H2-type zinc fingers span residues 485–507 (CPCDKCDKVFPSISKLQRHYLIH), 513–535 (FDCNVCGKSFRQSAHLKRHKLTH), 640–662 (YQCSVCCKHFRSPSKLERHYLIH), and 668–690 (FECSVCGKTFRQAPHWKRHQLTH). Lysine 698 participates in a covalent cross-link: Glycyl lysine isopeptide (Lys-Gly) (interchain with G-Cter in SUMO2).

This sequence belongs to the krueppel C2H2-type zinc-finger protein family.

The protein resides in the nucleus. Functionally, may be involved in transcriptional regulation. This Mus musculus (Mouse) protein is Zinc finger protein 770 (Znf770).